A 245-amino-acid polypeptide reads, in one-letter code: Cypemycin N-terminal methyltransferase (245 aa).

The protein belongs to the methyltransferase superfamily.

It catalyses the reaction N-terminal L-alanyl-[cypemycin] + 2 S-adenosyl-L-methionine = N-terminal N,N-dimethyl-L-alanyl-[cypemycin] + 2 S-adenosyl-L-homocysteine + 3 H(+). Its function is as follows. Involved in the biosynthesis of the lanaridin cypemycin. The enzyme can methylate a variety of oligopeptides, cyclic peptides and the epsilon-amino group of lysine. The chain is Cypemycin N-terminal methyltransferase from Streptomyces sp.